The following is a 325-amino-acid chain: Homocysteine S-methyltransferase 2 (325 aa).

In terms of domain architecture, Hcy-binding spans 6 to 321; the sequence is LKQFLADNPK…KDIQEISAAV (316 aa). Phosphothreonine is present on threonine 138. 3 residues coordinate Zn(2+): cysteine 239, cysteine 306, and cysteine 307.

The cofactor is Zn(2+).

The protein localises to the cytoplasm. It localises to the nucleus. It catalyses the reaction S-methyl-L-methionine + L-homocysteine = 2 L-methionine + H(+). In terms of biological role, homocysteine S-methyltransferase involved in the conversion of S-adenosylmethionine (AdoMet) to methionine to control the methionine/AdoMet ratio. Also converts S-methylmethionine (SMM) to methionine. The sequence is that of Homocysteine S-methyltransferase 2 (SAM4) from Saccharomyces cerevisiae (strain ATCC 204508 / S288c) (Baker's yeast).